The chain runs to 98 residues: PsbF-like protein (98 aa).

2 consecutive transmembrane segments (helical) span residues 5–25 and 73–93; these read VLLVISPIIFAWIFTVFWLGK and TAAVNALGIPTVFFLGAILAM.

This sequence belongs to the PsbE/PsbF family.

Its subcellular location is the membrane. In terms of biological role, unknown. Resembles PsbF, one of the subunits of the photosystem II reaction center. However, it encodes asparagine rather than histidine at the site PsbF uses to bind heme. This chain is PsbF-like protein, found in Prochlorococcus marinus (strain MIT 9312).